We begin with the raw amino-acid sequence, 523 residues long: Paraspeckle component 1 (523 aa).

M1 is subject to N-acetylmethionine. RRM domains follow at residues 81–153 and 155–236; these read CRLF…FATH and AALT…PMEQ. Residues 124 to 357 form a sufficient for paraspeckles localization region; sequence ESRTLAEIAK…QLRHEEEHRR (234 aa). Residues 230-357 form a sufficient for perinucleolar caps localization and interaction with NONO region; that stretch reads IVEPMEQFDD…QLRHEEEHRR (128 aa). Positions 282 to 376 form a coiled coil; sequence DEMEKQQREQ…EQEELRRQQE (95 aa). A phosphoserine mark is found at S409, S473, and S477. The tract at residues 460-523 is disordered; sequence GAVHNDRFPQ…FEGPNKRRRY (64 aa). A compositionally biased stretch (polar residues) spans 472-490; the sequence is PSQMGSPMGNRTGSETPQA. Over residues 497–514 the composition is skewed to gly residues; sequence PVSGGPGGFGRGSQGGNF. An Omega-N-methylarginine modification is found at R507. Phosphoserine is present on S509.

The protein belongs to the PSPC family. As to quaternary structure, forms heterodimers with NONO; this involves formation of a coiled coil domain by helices from both proteins. Found in a RNP complex with CAT2 transcribed nuclear RNA (CTN-RNA). Interaction with NONO is required for its targeting to paraspeckles and perinucleolar caps. Interacts with SFPQ. Part of the HDP-RNP complex composed of at least HEXIM1, PRKDC, XRCC5, XRCC6, paraspeckle proteins (SFPQ, NONO, PSPC1, RBM14, and MATR3) and NEAT1 RNA. Interacts with ALKBH5 (when acetylated); interaction with acetylated ALKBH5 facilitates recognition of N(6)-methyladenosine (m6A) RNAs. Isoform 1 is strongly expressed in testis (leptoten spermatocytes, round spematids and Sertoli cells) and moderately in cerebrum, cerebellum, lung, spleen and ovary (at protein level). Isoform 2 is strongly expressed in kidney and moderately in salivary gland (at protein level).

The protein resides in the nucleus speckle. Its subcellular location is the nucleus. The protein localises to the nucleolus. It localises to the nucleus matrix. It is found in the cytoplasm. In terms of biological role, RNA-binding protein required for the formation of nuclear paraspeckles. Binds to poly(A), poly(G) and poly(U) RNA homopolymers. Regulates, cooperatively with NONO and SFPQ, androgen receptor-mediated gene transcription activity in Sertoli cell line. Regulates the circadian clock by repressing the transcriptional activator activity of the CLOCK-BMAL1 heterodimer. Plays a role in the regulation of DNA virus-mediated innate immune response by assembling into the HDP-RNP complex, a complex that serves as a platform for IRF3 phosphorylation and subsequent innate immune response activation through the cGAS-STING pathway. In Mus musculus (Mouse), this protein is Paraspeckle component 1 (Pspc1).